The chain runs to 209 residues: Glutathione S-transferase (209 aa).

The 85-residue stretch at phenylalanine 7–glycine 91 folds into the GST N-terminal domain. Glutathione-binding positions include glutamine 62–valine 63, glutamine 75–serine 76, aspartate 109, lysine 121, and threonine 125. The GST C-terminal domain occupies glycine 93–tyrosine 209.

This sequence belongs to the GST superfamily. Homodimer. In the absence of ligands two homodimers may interact to form a tetramer.

The catalysed reaction is RX + glutathione = an S-substituted glutathione + a halide anion + H(+). In terms of biological role, conjugation of reduced glutathione to a wide number of exogenous and endogenous hydrophobic electrophiles. May also function as a storage protein or ligandin for parasitotoxic ferriprotoporphyrin IX (hemin). The polypeptide is Glutathione S-transferase (Plasmodium yoelii yoelii).